A 511-amino-acid polypeptide reads, in one-letter code: ATP synthase subunit alpha (511 aa).

169–176 lines the ATP pocket; it reads GDRQTGKT.

It belongs to the ATPase alpha/beta chains family. In terms of assembly, F-type ATPases have 2 components, CF(1) - the catalytic core - and CF(0) - the membrane proton channel. CF(1) has five subunits: alpha(3), beta(3), gamma(1), delta(1), epsilon(1). CF(0) has three main subunits: a(1), b(2) and c(9-12). The alpha and beta chains form an alternating ring which encloses part of the gamma chain. CF(1) is attached to CF(0) by a central stalk formed by the gamma and epsilon chains, while a peripheral stalk is formed by the delta and b chains.

It is found in the cell inner membrane. The catalysed reaction is ATP + H2O + 4 H(+)(in) = ADP + phosphate + 5 H(+)(out). Produces ATP from ADP in the presence of a proton gradient across the membrane. The alpha chain is a regulatory subunit. This is ATP synthase subunit alpha from Bartonella henselae (strain ATCC 49882 / DSM 28221 / CCUG 30454 / Houston 1) (Rochalimaea henselae).